The following is a 273-amino-acid chain: Undecaprenyl-diphosphatase (273 aa).

7 helical membrane-spanning segments follow: residues 6–26, 45–65, 90–110, 116–136, 190–210, 222–242, and 252–272; these read SLLI…LPVS, AKTF…VMFW, LTLI…LLFH, LFNP…LIAA, YAAS…ATAL, GDIP…LIAI, and ISFI…YVVF.

It belongs to the UppP family.

It localises to the cell inner membrane. It carries out the reaction di-trans,octa-cis-undecaprenyl diphosphate + H2O = di-trans,octa-cis-undecaprenyl phosphate + phosphate + H(+). Catalyzes the dephosphorylation of undecaprenyl diphosphate (UPP). Confers resistance to bacitracin. This Escherichia coli O127:H6 (strain E2348/69 / EPEC) protein is Undecaprenyl-diphosphatase.